The primary structure comprises 591 residues: Vomeromodulin (591 aa).

The signal sequence occupies residues 1-18 (MWVLQALAIMLSIQAGTL). The tract at residues 151-172 (NEGNGDSSKPSSGSKATGGLGQ) is disordered. 2 N-linked (GlcNAc...) asparagine glycosylation sites follow: asparagine 421 and asparagine 516.

In terms of processing, N-glycosylated. The N-glycans consist mainly of complex sialylated and fucosylated biantennary structures. In terms of tissue distribution, expressed in lung. Not detected in other tissues tested (at protein level).

It localises to the secreted. This is Vomeromodulin from Mus musculus (Mouse).